A 282-amino-acid chain; its full sequence is Shikimate dehydrogenase (NADP(+)) (282 aa).

Shikimate contacts are provided by residues 18–20 (SRS) and threonine 65. Residue lysine 69 is the Proton acceptor of the active site. Residues asparagine 90 and aspartate 106 each contribute to the shikimate site. NADP(+) contacts are provided by residues 134–138 (GAGGA), 158–163 (NRTAAR), and isoleucine 223. Tyrosine 225 provides a ligand contact to shikimate. An NADP(+)-binding site is contributed by glycine 246.

It belongs to the shikimate dehydrogenase family. In terms of assembly, homodimer.

It catalyses the reaction shikimate + NADP(+) = 3-dehydroshikimate + NADPH + H(+). It functions in the pathway metabolic intermediate biosynthesis; chorismate biosynthesis; chorismate from D-erythrose 4-phosphate and phosphoenolpyruvate: step 4/7. Functionally, involved in the biosynthesis of the chorismate, which leads to the biosynthesis of aromatic amino acids. Catalyzes the reversible NADPH linked reduction of 3-dehydroshikimate (DHSA) to yield shikimate (SA). In Methylobacterium radiotolerans (strain ATCC 27329 / DSM 1819 / JCM 2831 / NBRC 15690 / NCIMB 10815 / 0-1), this protein is Shikimate dehydrogenase (NADP(+)).